The chain runs to 492 residues: Proline--tRNA ligase (492 aa).

The protein belongs to the class-II aminoacyl-tRNA synthetase family. ProS type 3 subfamily. In terms of assembly, homodimer.

It is found in the cytoplasm. It carries out the reaction tRNA(Pro) + L-proline + ATP = L-prolyl-tRNA(Pro) + AMP + diphosphate. Its function is as follows. Catalyzes the attachment of proline to tRNA(Pro) in a two-step reaction: proline is first activated by ATP to form Pro-AMP and then transferred to the acceptor end of tRNA(Pro). The protein is Proline--tRNA ligase of Christiangramia forsetii (strain DSM 17595 / CGMCC 1.15422 / KT0803) (Gramella forsetii).